A 314-amino-acid chain; its full sequence is Hydroxyacyl-coenzyme A dehydrogenase, mitochondrial (314 aa).

Residues 1–12 (MAFATRQLVRSL) constitute a mitochondrion transit peptide. Residues 34–39 (GGGLMG) and aspartate 57 each bind NAD(+). CoA contacts are provided by serine 73 and lysine 80. An N6-succinyllysine modification is found at lysine 80. Lysine 81 and lysine 87 each carry N6-acetyllysine; alternate. Lysine 81 and lysine 87 each carry N6-succinyllysine; alternate. Glutamate 122 contacts NAD(+). Lysine 125 carries the N6-acetyllysine modification. Lysine 127 contacts NAD(+). Lysine 127 bears the N6-(2-hydroxyisobutyryl)lysine mark. Lysine 136 bears the N6-acetyllysine; alternate mark. N6-succinyllysine; alternate is present on lysine 136. NAD(+) is bound by residues serine 149 and asparagine 173. Position 149 (serine 149) interacts with CoA. Position 179 is an N6-acetyllysine (lysine 179). 3 positions are modified to N6-acetyllysine; alternate: lysine 185, lysine 192, and lysine 202. Residues lysine 185, lysine 192, and lysine 202 each carry the N6-succinyllysine; alternate modification. Position 206 is an N6-succinyllysine (lysine 206). An N6-acetyllysine; alternate mark is found at lysine 212 and lysine 241. N6-succinyllysine; alternate occurs at positions 212 and 241. Lysine 305 is an NAD(+) binding site. The residue at position 312 (lysine 312) is an N6-acetyllysine; alternate. Lysine 312 is subject to N6-succinyllysine; alternate.

The protein belongs to the 3-hydroxyacyl-CoA dehydrogenase family. Homodimer. Interacts with GLUD1; this interaction inhibits the activation of glutamate dehydrogenase 1 (GLUD1). In terms of processing, succinylation at Lys-81, adjacent to a coenzyme A binding site. Desuccinylated by SIRT5.

It is found in the mitochondrion matrix. The enzyme catalyses a (3S)-3-hydroxyacyl-CoA + NAD(+) = a 3-oxoacyl-CoA + NADH + H(+). It catalyses the reaction (3S)-3-hydroxybutanoyl-CoA + NAD(+) = acetoacetyl-CoA + NADH + H(+). It carries out the reaction (3S)-hydroxydecanoyl-CoA + NAD(+) = 3-oxodecanoyl-CoA + NADH + H(+). The catalysed reaction is (3S)-hydroxyhexadecanoyl-CoA + NAD(+) = 3-oxohexadecanoyl-CoA + NADH + H(+). It participates in lipid metabolism; fatty acid beta-oxidation. Functionally, mitochondrial fatty acid beta-oxidation enzyme that catalyzes the third step of the beta-oxidation cycle for medium and short-chain 3-hydroxy fatty acyl-CoAs (C4 to C10). Plays a role in the control of insulin secretion by inhibiting the activation of glutamate dehydrogenase 1 (GLUD1), an enzyme that has an important role in regulating amino acid-induced insulin secretion. Plays a role in the maintenance of normal spermatogenesis through the reduction of fatty acid accumulation in the testes. This Sus scrofa (Pig) protein is Hydroxyacyl-coenzyme A dehydrogenase, mitochondrial (HADH).